Reading from the N-terminus, the 269-residue chain is Type II iodothyronine deiodinase (269 aa).

At 1–9 the chain is on the lumenal side; that stretch reads MGILSVDLL. The chain crosses the membrane as a helical; Signal-anchor for type III membrane protein span at residues 10 to 34; the sequence is ITLQILPVFFSNCLFLALYDSVILL. At 35–269 the chain is on the cytoplasmic side; that stretch reads KHVVLLLSRS…KNFSKRUKLD (235 aa). Residues 83-103 form a disordered region; it reads NSSVVHVSSPEGGDTSGNGAQ. Sec-133 is an active-site residue. Non-standard amino acids (selenocysteine) are located at Sec-133 and Sec-266.

Belongs to the iodothyronine deiodinase family. As to quaternary structure, predominantly monomer. Can form homodimers but homodimerization is not essential for enzyme activity. Interacts with USP20 and USP33. Interacts with MARCHF6. Ubiquitinated by MARCHF6, leading to its degradation by the proteasome. Deubiquitinated by USP20 and USP33. As to expression, highly expressed in thyroid, mammary and pituitary glands, then in hypothalamus. Low levels detected in diaphragm, heart, kidney and lung.

The protein resides in the endoplasmic reticulum membrane. It catalyses the reaction 3,3',5-triiodo-L-thyronine + iodide + A + H(+) = L-thyroxine + AH2. The enzyme catalyses 3,3'-diiodo-L-thyronine + iodide + A + H(+) = 3,3',5'-triiodo-L-thyronine + AH2. It carries out the reaction 3'-iodo-L-thyronine + iodide + A + H(+) = 3',5'-diiodo-L-thyronine + AH2. The catalysed reaction is 3,3'-diiodothyronamine + iodide + A + H(+) = 3,3',5'-triiodothyronamine + AH2. It catalyses the reaction 3'-iodothyronamine + iodide + A + H(+) = 3',5'-diiodothyronamine + AH2. Functionally, plays a crucial role in the metabolism of thyroid hormones (TH) and has specific roles in TH activation and inactivation by deiodination. Catalyzes the deiodination of L-thyroxine (T4) to 3,5,3'-triiodothyronine (T3), 3,3',5'-triiodothyronine (rT3) to 3,3'-diiodothyronine (3,3'-T2) and 3',5'-diiodothyronine (3',5'-T2) to 3'-monoiodothyronine (3'-T1) via outer-ring deiodination (ORD). Catalyzes the phenolic ring deiodinations of 3,3',5'-triiodothyronamine and 3',5'- diiodothyronamine. The chain is Type II iodothyronine deiodinase (DIO2) from Bos taurus (Bovine).